Here is a 95-residue protein sequence, read N- to C-terminus: Aspartyl/glutamyl-tRNA(Asn/Gln) amidotransferase subunit C (95 aa).

Belongs to the GatC family. As to quaternary structure, heterotrimer of A, B and C subunits.

It carries out the reaction L-glutamyl-tRNA(Gln) + L-glutamine + ATP + H2O = L-glutaminyl-tRNA(Gln) + L-glutamate + ADP + phosphate + H(+). The catalysed reaction is L-aspartyl-tRNA(Asn) + L-glutamine + ATP + H2O = L-asparaginyl-tRNA(Asn) + L-glutamate + ADP + phosphate + 2 H(+). In terms of biological role, allows the formation of correctly charged Asn-tRNA(Asn) or Gln-tRNA(Gln) through the transamidation of misacylated Asp-tRNA(Asn) or Glu-tRNA(Gln) in organisms which lack either or both of asparaginyl-tRNA or glutaminyl-tRNA synthetases. The reaction takes place in the presence of glutamine and ATP through an activated phospho-Asp-tRNA(Asn) or phospho-Glu-tRNA(Gln). In Hydrogenovibrio crunogenus (strain DSM 25203 / XCL-2) (Thiomicrospira crunogena), this protein is Aspartyl/glutamyl-tRNA(Asn/Gln) amidotransferase subunit C.